The sequence spans 437 residues: 3-phosphoshikimate 1-carboxyvinyltransferase (437 aa).

Residues lysine 24, serine 25, and arginine 29 each coordinate 3-phosphoshikimate. Residue lysine 24 participates in phosphoenolpyruvate binding. The phosphoenolpyruvate site is built by glycine 95 and arginine 123. 4 residues coordinate 3-phosphoshikimate: serine 168, glutamine 170, aspartate 317, and lysine 344. Glutamine 170 serves as a coordination point for phosphoenolpyruvate. Aspartate 317 (proton acceptor) is an active-site residue. Positions 348 and 390 each coordinate phosphoenolpyruvate.

Belongs to the EPSP synthase family. As to quaternary structure, monomer.

The protein resides in the cytoplasm. It catalyses the reaction 3-phosphoshikimate + phosphoenolpyruvate = 5-O-(1-carboxyvinyl)-3-phosphoshikimate + phosphate. It participates in metabolic intermediate biosynthesis; chorismate biosynthesis; chorismate from D-erythrose 4-phosphate and phosphoenolpyruvate: step 6/7. Functionally, catalyzes the transfer of the enolpyruvyl moiety of phosphoenolpyruvate (PEP) to the 5-hydroxyl of shikimate-3-phosphate (S3P) to produce enolpyruvyl shikimate-3-phosphate and inorganic phosphate. The sequence is that of 3-phosphoshikimate 1-carboxyvinyltransferase from Wolinella succinogenes (strain ATCC 29543 / DSM 1740 / CCUG 13145 / JCM 31913 / LMG 7466 / NCTC 11488 / FDC 602W) (Vibrio succinogenes).